The sequence spans 325 residues: Phosphate acyltransferase (325 aa).

This sequence belongs to the PlsX family. As to quaternary structure, homodimer. Probably interacts with PlsY.

The protein resides in the cytoplasm. The catalysed reaction is a fatty acyl-[ACP] + phosphate = an acyl phosphate + holo-[ACP]. It functions in the pathway lipid metabolism; phospholipid metabolism. Catalyzes the reversible formation of acyl-phosphate (acyl-PO(4)) from acyl-[acyl-carrier-protein] (acyl-ACP). This enzyme utilizes acyl-ACP as fatty acyl donor, but not acyl-CoA. The protein is Phosphate acyltransferase of Staphylococcus epidermidis (strain ATCC 35984 / DSM 28319 / BCRC 17069 / CCUG 31568 / BM 3577 / RP62A).